A 418-amino-acid polypeptide reads, in one-letter code: MFSKGMEIAGFDDELWAAIQEEERRQEDHIELIASENYASPRVLQAQGTVLTNKYAEGYPGKRYYGGCEYVDIVETLAIERAKRLFGADYANVQPHSGSQANAAVYMALLKPGDTVLGMSLAHGGHLTHGAKVNFSGKIYNAVQYGLNPETGEIDYDQVDELAREHRPKMIVAGFSAYSQVVDWQRFRAIADSVGAWLMVDMAHVAGLIAAGLYPSPVQIADVTTTTTHKTLRGPRGGLILAKANPEVEKQLNSLVFPGIQGGPLMHVIAAKAVALKEALQPDFRHYQSAVMENADAMAKTFIERGYRIVSGGTRNHLFLVDLIQKGLTGKLAEEVLGRAHITVNKNAVPNDPQSPFVTSGIRVGTPAVTTRGFGVEECRLLAGWMCDIMDCPGDETVIGQVREEVTHLCRRFPVYAN.

Residues Leu-121 and 125–127 contribute to the (6S)-5,6,7,8-tetrahydrofolate site; that span reads GHL. Lys-230 is subject to N6-(pyridoxal phosphate)lysine. Residue 355–357 coordinates (6S)-5,6,7,8-tetrahydrofolate; that stretch reads SPF.

The protein belongs to the SHMT family. Homodimer. Pyridoxal 5'-phosphate is required as a cofactor.

It localises to the cytoplasm. It catalyses the reaction (6R)-5,10-methylene-5,6,7,8-tetrahydrofolate + glycine + H2O = (6S)-5,6,7,8-tetrahydrofolate + L-serine. It functions in the pathway one-carbon metabolism; tetrahydrofolate interconversion. The protein operates within amino-acid biosynthesis; glycine biosynthesis; glycine from L-serine: step 1/1. In terms of biological role, catalyzes the reversible interconversion of serine and glycine with tetrahydrofolate (THF) serving as the one-carbon carrier. This reaction serves as the major source of one-carbon groups required for the biosynthesis of purines, thymidylate, methionine, and other important biomolecules. Also exhibits THF-independent aldolase activity toward beta-hydroxyamino acids, producing glycine and aldehydes, via a retro-aldol mechanism. The polypeptide is Serine hydroxymethyltransferase (Methylococcus capsulatus (strain ATCC 33009 / NCIMB 11132 / Bath)).